Consider the following 1361-residue polypeptide: MAYSYTEKKRIRKNFGKLPHVMDVPYLLAIQLDSYRKFTQADLSANKREDVGLHAAFRSVFPIVSYSGNAALEYVSYSLGKAAFDVNECILRGVTYAVPLRVKVRLIIYDRESANKAIKDIKEQEVYMGEIPLMTDNGTFVINGTERVIVSQLHRSPGVFFDHDKGKTHSSGKLLYSARIIPYRGSWLDFEFDPKDLLYVRIDRRRKLPATILLRALNYSSQEMLSMFFETSSFTLGKDGQFSYEVVPSRLRGDVATFDIKDDKGNIIVEEGRRITARHIRQLEKAGVDQMEVPSEYLLGRSLAKDIVDTRTGELLFECNTEITSDVLSKIVAAGVEKVETLYTNELDCGPFISETLRIDPTRTQLEALVEIYRMMRPGEPPTKESAEALFQNLFFSQERYDLSAVGRMKFNRRLGRETETGEGTLSNDDIVDVMKTLISIRNGKGVVDDIDHLGNRRVRSVGEMAENQFRVGLVRVERAVKERLSMAESEGLMPQDLINAKPVAAAVKEFFGSSQLSQFMDQNNPLSEITHKRRVFALGPGGLTRERAGFEVRDVHPTHYGRVCPIETPEGPNIGLINSLATYARTNNYGFLESPYRKVIEGKVTDQIEYLSAINESEYVIAQASASLDDNGRLTEELVSVRHQNEFTLKAPTDVQYMDVSARQVVSVAASLIPFLEHDDANRALMGSNMQRQAVPTLRSQKPLVGTGMERNVAADSGVCVVAKRGGVIDSVDAGRIVVKVHDAEVEAGDAGVDIYNLIKYTRSNQNTCINQRPIVSMGDIVSRGDILADGPSVDMGELALGQNMRIAFMPWNGYNFEDSILVSERVVQEDRFTTIHIQELTCIARDTKLGSEEITADIPNVGESALSKLDESGIVYIGAEVGGGDILVGKVTPKGETQLTPEEKLLRAIFGEKASDVKDTSLRVPSGTKGTVIDVQVFTRDGLEKDQRSLEIEKAQLDEVRKDLNEEFRIVETATFERLRAALVGQIVASGKGVKKGEALTHDILDGLEKDQWFKLRMNEDALNEQIDRAEEQLAERRKILDERFEDKKRKLSTGDDLAPGVLKIVKVYLAIKRRIQPGDKMAGRHGNKGVISVIMPVEDMPYDENGETVDIVLNPLGVPSRMNVGQVLEMHLGMAAKGLGVKINKLIQEQKAVADIRSFLEEIYNSTGDVAAKEDLVSFSDREVIDLAKNLVDGVPMATPVFDGAKEHEIKALLRLASLSDTGQTTLFDGRTGDQFSRSVTVGYMYMLKLNHLVDDKMHARSTGSYSLVTQQPLGGKAQFGGQRFGEMEVWALEAYGAAYTLQEMLTVKSDDVAGRTKMYKNIVDGDHRMEPGMPESFNVLVKEIRSLGINIELEQED.

Belongs to the RNA polymerase beta chain family. In terms of assembly, the RNAP catalytic core consists of 2 alpha, 1 beta, 1 beta' and 1 omega subunit. When a sigma factor is associated with the core the holoenzyme is formed, which can initiate transcription.

The enzyme catalyses RNA(n) + a ribonucleoside 5'-triphosphate = RNA(n+1) + diphosphate. Its function is as follows. DNA-dependent RNA polymerase catalyzes the transcription of DNA into RNA using the four ribonucleoside triphosphates as substrates. This chain is DNA-directed RNA polymerase subunit beta, found in Cellvibrio japonicus (strain Ueda107) (Pseudomonas fluorescens subsp. cellulosa).